A 357-amino-acid polypeptide reads, in one-letter code: Guanine nucleotide-binding protein G(o) subunit alpha (357 aa).

The N-myristoyl glycine moiety is linked to residue glycine 2. A lipid anchor (S-palmitoyl cysteine) is attached at cysteine 3. Residues 32–357 (KDIKLLLLGA…ANNLRGCGLY (326 aa)) form the G-alpha domain. The G1 motif stretch occupies residues 35–48 (KLLLLGAGESGKST). GTP-binding positions include 40-47 (GAGESGKS), 179-185 (LRTRVKT), 204-208 (DVGGQ), 273-276 (NKKD), and alanine 329. 2 residues coordinate Mg(2+): serine 47 and threonine 185. Residues 177 to 185 (DILRTRVKT) are G2 motif. Positions 200 to 209 (FKLFDVGGQR) are G3 motif. The segment at 269–276 (ILFLNKKD) is G4 motif. Residues 327-332 (TCATDT) are G5 motif.

The protein belongs to the G-alpha family. G(i/o/t/z) subfamily. In terms of assembly, g proteins are composed of 3 units; alpha, beta and gamma. The alpha chain contains the guanine nucleotide binding site.

Guanine nucleotide-binding proteins (G proteins) are involved as modulators or transducers in various transmembrane signaling systems. The G(o) protein function is not clear. The protein is Guanine nucleotide-binding protein G(o) subunit alpha (SCGOA) of Mizuhopecten yessoensis (Japanese scallop).